The primary structure comprises 375 residues: GDSL esterase/lipase At5g45960 (375 aa).

Positions 1–28 are cleaved as a signal peptide; sequence MRSHHRHFSSYVSFILFLFLFFISFSSS. Ser-54 functions as the Nucleophile in the catalytic mechanism. A glycan (N-linked (GlcNAc...) asparagine) is linked at Asn-340. Residues Asp-348 and His-351 contribute to the active site.

It belongs to the 'GDSL' lipolytic enzyme family.

Its subcellular location is the secreted. The sequence is that of GDSL esterase/lipase At5g45960 from Arabidopsis thaliana (Mouse-ear cress).